We begin with the raw amino-acid sequence, 872 residues long: Protein SEY1 (872 aa).

Residues 1–749 are Cytoplasmic-facing; it reads MVANGHFAGV…KRSAIGGITQ (749 aa). The region spanning 49–294 is the GB1/RHD3-type G domain; the sequence is GFNYHLISVF…IEGGIFLPEY (246 aa). Residue 59–66 coordinates GTP; sequence GSQSTGKS. Positions 482 to 504 form a coiled coil; the sequence is SNYQQELSLYQKDLENIGGQLRR. Positions 676 to 704 are disordered; the sequence is LDKWIGHTPSSATPADEEDLTPIGGVDED. Acidic residues predominate over residues 690 to 704; that stretch reads ADEEDLTPIGGVDED. A helical membrane pass occupies residues 750-770; sequence VPLYFYGLLLALGWNEIVAVL. Residues 771–773 are Lumenal-facing; the sequence is RNP. A helical transmembrane segment spans residues 774–794; it reads AYFLLLFVCAVTAYVTYQLNL. Over 795-872 the chain is Cytoplasmic; sequence WGPIIKMTEA…IDDADDDDDF (78 aa). The interval 849–872 is disordered; the sequence is NRKSAGGFQNNRSHIDDADDDDDF.

Belongs to the TRAFAC class dynamin-like GTPase superfamily. GB1/RHD3 GTPase family. RHD3 subfamily.

It localises to the endoplasmic reticulum membrane. Its function is as follows. Cooperates with the reticulon proteins and tubule-shaping DP1 family proteins to generate and maintain the structure of the tubular endoplasmic reticulum network. Has GTPase activity, which is required for its function in ER organization. The polypeptide is Protein SEY1 (Paracoccidioides brasiliensis (strain Pb03)).